Consider the following 1264-residue polypeptide: MTKTTKPKEKAAAGGAVIGSGSGLGSVTKAGGGSLLSNAADSKIRTAKSNNNKRQAGRAATALAATTTASALAATTTAGATGSNAAANETEIAIETENGEAATPTAAATAAAANLSSLESARSQALTSVVSETARQAVTTANASATSTSTVTAATEIATATASDTAATSEAAIDDDPSAINTNNNNNNSKAQNDASESVKTKVISYHQSEDQQQQQQQQAQIYEQQQQFLSQQLISHHQQEQHQQAQQQQHQQVVQEQHQASWLAYDLTSGSAAAAAAAAAAASHPHLFGQFSYPPSHHTPTQLYEHYPSTDPIMRNNFAFYSVYTGGGGGVGVGMTSHEHLAAAAAAAAAVAQGTTPNIDEVIQDTLKDECFEDGHSTDYHVLTSVSDMHTLKDSSPYALTHEQLHQQQHHHQQQLHHHQQQQQQLYHQQQQQQQQQQHHHHHNNSTSSAGGDSPSSSHALSTLQSFTQLTSATQRDSLSPENDAYFAAAQLGSSLQNSSVYAGSLLTQTANGIQYGMQSPNQTQAHLQQQHHQQQQQQHQQHQQQQLQQQQQQHHHNQHQHHNSSSSSPGPAGLHHSSSSAATAAAVAAATAAVNGHNSSLEDGYGSPRSSHSGGGGGGTLPAFQRIAYPNSGSVERYAPITNYRGQNDTWFDPLSYATSSSGQAQLGVGVGAGVVSNVIRNGRAISAANAAAAAAADGTTGRVDPGTFLSASASLSAMAAESGGDFYKPNSFNVGGGGRSKANTSGAASSYSCPGSNATSAATSAVASGTAATAATTLDEHVSRANSRRLSASKRAGLSCSNCHTTHTSLWRRNPAGEPVCNACGLYYKLHSVPRPLTMKKDTIQKRKRKPKGTKSEKSKSKSKNALNAIMESGSLVTNCHNVGVVLDSSQMDVNDDMKPQLDLKPYNSYSSQPQQQLPQYQQQQQLLMADQHSSAASSPHSMGSTSLSPSAMSHQHQTHPHQQQQQQLCSGLDMSPNSNYQMSPLNMQQHQQQQSCSMQHSPSTPTSIFNTPSPTHQLHNNNNNNNNSSIFNNNNNNNSSSNENNNKLIQKYLQAQQLSSSSNSGSTSDHQLLAQLLPNSITAAAAAAAAAAAAAIKTEALSLTSQANCSTASAGLMVTSTPTTASSTLSSLSHSNIISLQNPYHQAGMTLCKPTRPSPPYYLTPEEDEQPALIKMEEMDQSQQQQQQQQHQQQQHGEIMLSRSASLDEHYELAAFQRHQQQQQQLQQQTAALLGQHEQHVTNYAMHKFGVDRETVVKME.

The segment covering 1–11 (MTKTTKPKEKA) has biased composition (basic and acidic residues). Disordered regions lie at residues 1-25 (MTKT…SGLG), 161-200 (TASD…ESVK), 234-253 (LISH…QHQQ), 405-463 (QLHQ…HALS), 523-585 (NQTQ…SAAT), and 599-627 (HNSS…PAFQ). The span at 16-25 (AVIGSGSGLG) shows a compositional bias: gly residues. A compositionally biased stretch (low complexity) spans 161–171 (TASDTAATSEA). Positions 189 to 198 (SKAQNDASES) are enriched in polar residues. Positions 409–421 (QQHHHQQQLHHHQ) are enriched in basic residues. Low complexity-rich tracts occupy residues 422-438 (QQQQ…QQQQ), 447-459 (STSS…PSSS), and 523-554 (NQTQ…QQQQ). A compositionally biased stretch (basic residues) spans 555–564 (QHHHNQHQHH). 2 stretches are compositionally biased toward low complexity: residues 565-585 (NSSS…SAAT) and 599-614 (HNSS…RSSH). Residues 803–827 (CSNCHTTHTSLWRRNPAGEPVCNAC) form a GATA-type zinc finger. 3 disordered regions span residues 841–867 (TMKK…SKSK), 899–1048 (DDMK…SNEN), and 1181–1202 (EEMD…QHGE). Composition is skewed to low complexity over residues 909 to 950 (PYNS…GSTS) and 985 to 1007 (QMSP…HSPS). A compositionally biased stretch (polar residues) spans 1008-1023 (TPTSIFNTPSPTHQLH). 2 stretches are compositionally biased toward low complexity: residues 1024 to 1048 (NNNN…SNEN) and 1185 to 1200 (QSQQ…QQQH). Residues S1208 and S1210 each carry the phosphoserine modification.

Interacts (via GATA-type Zn-finger domain) with Bfc; this interaction enhances srp binding to the promoter of crq/croquemort.

The protein resides in the nucleus. Functionally, may function as a transcriptional activator protein and may play a key role in the organogenesis of the fat body. Binds a sequence element (5'-[TA]GATAA-3') found in the larval promoters of all known alcohol dehydrogenase (ADH) genes. Acts as a homeotic gene downstream of the terminal gap gene HKB to promote morphogenesis and differentiation of anterior and posterior midgut. Together with transcriptional cofactor Bfc directly binds the promoter of phagocytic receptor crq/croquemort to upregulate its expression and stimulate efferocytosis in response to apoptotic cells, including during embryogenesis. The polypeptide is Box A-binding factor (srp) (Drosophila melanogaster (Fruit fly)).